The following is a 104-amino-acid chain: MAKGQAVGINKGFITTQLEKKLQKHSAVQRKGKLGKRVALVRQVIREVTGFAPYEKRIIELIKAGSAKDSKKATKIARKRLGTHRRAKVKKALLEEAVRAQRKK.

The protein belongs to the eukaryotic ribosomal protein eL36 family.

The chain is Large ribosomal subunit protein eL36 (RPL36) from Tetrahymena thermophila (strain SB210).